We begin with the raw amino-acid sequence, 534 residues long: CTP synthase (534 aa).

Residues 1-266 form an amidoligase domain region; it reads MKTKFIFVTG…DEQVVEKLNI (266 aa). S14 lines the CTP pocket. Residue S14 coordinates UTP. Residues 15–20 and D72 each bind ATP; that span reads SIGKGL. 2 residues coordinate Mg(2+): D72 and E140. Residues 147–149, 187–192, and K223 each bind CTP; these read DIE and KTKPTQ. UTP contacts are provided by residues 187–192 and K223; that span reads KTKPTQ. Positions 292–534 constitute a Glutamine amidotransferase type-1 domain; sequence RIAIVGKYVN…IAAALHNIKA (243 aa). Residue G354 participates in L-glutamine binding. Residue C381 is the Nucleophile; for glutamine hydrolysis of the active site. L-glutamine contacts are provided by residues 382 to 385, E405, and R462; that span reads LGMQ. Residues H507 and E509 contribute to the active site.

This sequence belongs to the CTP synthase family. As to quaternary structure, homotetramer.

The catalysed reaction is UTP + L-glutamine + ATP + H2O = CTP + L-glutamate + ADP + phosphate + 2 H(+). The enzyme catalyses L-glutamine + H2O = L-glutamate + NH4(+). It carries out the reaction UTP + NH4(+) + ATP = CTP + ADP + phosphate + 2 H(+). It participates in pyrimidine metabolism; CTP biosynthesis via de novo pathway; CTP from UDP: step 2/2. Allosterically activated by GTP, when glutamine is the substrate; GTP has no effect on the reaction when ammonia is the substrate. The allosteric effector GTP functions by stabilizing the protein conformation that binds the tetrahedral intermediate(s) formed during glutamine hydrolysis. Inhibited by the product CTP, via allosteric rather than competitive inhibition. Functionally, catalyzes the ATP-dependent amination of UTP to CTP with either L-glutamine or ammonia as the source of nitrogen. Regulates intracellular CTP levels through interactions with the four ribonucleotide triphosphates. In Geotalea uraniireducens (strain Rf4) (Geobacter uraniireducens), this protein is CTP synthase.